Consider the following 362-residue polypeptide: E3 ubiquitin-protein ligase TM129 (362 aa).

Over 1–6 (MESPEV) the chain is Lumenal. The chain crosses the membrane as a helical span at residues 7 to 27 (TFTLAYVVFSVCFVFTPNEFH). The Cytoplasmic portion of the chain corresponds to 28-56 (SAGITVQNLLSGWLGSEDVAFVHYHIRRS). The helical transmembrane segment at 57-77 (TATLLTHSLLPMGYFIGMCFA) threads the bilayer. Topologically, residues 78-94 (APEKELYNVYKAADGWK) are lumenal. A helical membrane pass occupies residues 95–115 (VFVLITVLLPVTTSILAFYWS). Over 116–362 (QKRWGNHPLA…FCIVDVCIVR (247 aa)) the chain is Cytoplasmic. An RING-type; degenerate zinc finger spans residues 285–350 (CIGCMQTNAN…SSHVPCPTCR (66 aa)).

Belongs to the TMEM129 family. In terms of assembly, integral component of ER-resident dislocation complexes.

It localises to the endoplasmic reticulum membrane. It carries out the reaction S-ubiquitinyl-[E2 ubiquitin-conjugating enzyme]-L-cysteine + [acceptor protein]-L-lysine = [E2 ubiquitin-conjugating enzyme]-L-cysteine + N(6)-ubiquitinyl-[acceptor protein]-L-lysine.. Its pathway is protein modification; protein ubiquitination. Its function is as follows. E3 ubiquitin-protein ligase involved in ER-associated protein degradation, preferentially associates with the E2 enzyme UBE2J2. The sequence is that of E3 ubiquitin-protein ligase TM129 (tmem129) from Xenopus tropicalis (Western clawed frog).